Consider the following 257-residue polypeptide: Phycoerythrobilin:ferredoxin oxidoreductase (257 aa).

This sequence belongs to the HY2 family.

The catalysed reaction is (3Z)-phycoerythrobilin + oxidized 2[4Fe-4S]-[ferredoxin] = 15,16-dihydrobiliverdin + reduced 2[4Fe-4S]-[ferredoxin] + 2 H(+). In terms of biological role, catalyzes the two-electron reduction of the C2 and C3(1) diene system of 15,16-dihydrobiliverdin. This chain is Phycoerythrobilin:ferredoxin oxidoreductase, found in Synechococcus sp. (strain CC9311).